A 266-amino-acid polypeptide reads, in one-letter code: UPF0328 protein ECU05_1610/ECU11_0120 (266 aa).

Belongs to the UPF0328 family.

This chain is UPF0328 protein ECU05_1610/ECU11_0120, found in Encephalitozoon cuniculi (strain GB-M1) (Microsporidian parasite).